The primary structure comprises 177 residues: Small ribosomal subunit protein mS23 (177 aa).

Ala2 is subject to N-acetylalanine. N6-succinyllysine is present on Lys83. Lys102 is modified (N6-acetyllysine). Residues 145-177 are disordered; that stretch reads LQASSEGHEPQEDDDLAQRGQVKQEPETAPSPP.

It belongs to the mitochondrion-specific ribosomal protein mS23 family. Component of the mitochondrial ribosome small subunit (28S) which comprises a 12S rRNA and about 30 distinct proteins.

Its subcellular location is the mitochondrion. This chain is Small ribosomal subunit protein mS23, found in Mus musculus (Mouse).